The following is a 397-amino-acid chain: Riboflavin biosynthesis protein RibBA (397 aa).

The DHBP synthase stretch occupies residues 1 to 199 (MFHRIEEALE…IEDLIAYRRH (199 aa)). D-ribulose 5-phosphate contacts are provided by residues 26-27 (RE), Asp-31, 138-142 (RAGHT), and Glu-162. Glu-27 is a Mg(2+) binding site. His-141 provides a ligand contact to Mg(2+). The tract at residues 200 to 397 (HETLVTREVE…VNKLGHLLNL (198 aa)) is GTP cyclohydrolase II. 250–254 (RVHSE) is a GTP binding site. 3 residues coordinate Zn(2+): Cys-255, Cys-266, and Cys-268. GTP is bound by residues Gln-271, 293-295 (EGR), and Thr-315. Asp-327 functions as the Proton acceptor; for GTP cyclohydrolase activity in the catalytic mechanism. The active-site Nucleophile; for GTP cyclohydrolase activity is Arg-329. Residues Thr-350 and Lys-355 each coordinate GTP.

This sequence in the N-terminal section; belongs to the DHBP synthase family. In the C-terminal section; belongs to the GTP cyclohydrolase II family. It depends on Mg(2+) as a cofactor. Mn(2+) serves as cofactor. Zn(2+) is required as a cofactor.

It carries out the reaction D-ribulose 5-phosphate = (2S)-2-hydroxy-3-oxobutyl phosphate + formate + H(+). The catalysed reaction is GTP + 4 H2O = 2,5-diamino-6-hydroxy-4-(5-phosphoribosylamino)-pyrimidine + formate + 2 phosphate + 3 H(+). The protein operates within cofactor biosynthesis; riboflavin biosynthesis; 2-hydroxy-3-oxobutyl phosphate from D-ribulose 5-phosphate: step 1/1. It participates in cofactor biosynthesis; riboflavin biosynthesis; 5-amino-6-(D-ribitylamino)uracil from GTP: step 1/4. Catalyzes the conversion of D-ribulose 5-phosphate to formate and 3,4-dihydroxy-2-butanone 4-phosphate. In terms of biological role, catalyzes the conversion of GTP to 2,5-diamino-6-ribosylamino-4(3H)-pyrimidinone 5'-phosphate (DARP), formate and pyrophosphate. In Bacillus cereus (strain B4264), this protein is Riboflavin biosynthesis protein RibBA.